The following is a 327-amino-acid chain: Sphingomyelin synthase-related 2 (327 aa).

The next 5 membrane-spanning stretches (helical) occupy residues 54–74 (LLAT…LAWV), 99–119 (AIRI…LVMF), 131–151 (VFFC…IFQV), 192–212 (LCGD…FLVF), and 220–240 (LQPL…SILL). The active site involves His-201. Over 241–327 (ARKHYMIDIV…TLKKSRRSFE (87 aa)) the chain is Cytoplasmic. Catalysis depends on residues His-244 and Asp-248.

This sequence belongs to the sphingomyelin synthase family.

The protein localises to the membrane. The chain is Sphingomyelin synthase-related 2 from Caenorhabditis elegans.